The chain runs to 79 residues: uncharacterized protein (79 aa).

This is an uncharacterized protein from Acidianus two-tailed virus (ATV).